The following is a 252-amino-acid chain: 2-succinyl-6-hydroxy-2,4-cyclohexadiene-1-carboxylate synthase (252 aa).

The protein belongs to the AB hydrolase superfamily. MenH family. As to quaternary structure, monomer.

It carries out the reaction 5-enolpyruvoyl-6-hydroxy-2-succinyl-cyclohex-3-ene-1-carboxylate = (1R,6R)-6-hydroxy-2-succinyl-cyclohexa-2,4-diene-1-carboxylate + pyruvate. The protein operates within quinol/quinone metabolism; 1,4-dihydroxy-2-naphthoate biosynthesis; 1,4-dihydroxy-2-naphthoate from chorismate: step 3/7. Its pathway is quinol/quinone metabolism; menaquinone biosynthesis. Catalyzes a proton abstraction reaction that results in 2,5-elimination of pyruvate from 2-succinyl-5-enolpyruvyl-6-hydroxy-3-cyclohexene-1-carboxylate (SEPHCHC) and the formation of 2-succinyl-6-hydroxy-2,4-cyclohexadiene-1-carboxylate (SHCHC). In Escherichia coli (strain SMS-3-5 / SECEC), this protein is 2-succinyl-6-hydroxy-2,4-cyclohexadiene-1-carboxylate synthase.